Here is a 182-residue protein sequence, read N- to C-terminus: Large ribosomal subunit protein uL5 (182 aa).

The protein belongs to the universal ribosomal protein uL5 family. In terms of assembly, part of the 50S ribosomal subunit; part of the 5S rRNA/L5/L18/L25 subcomplex. Contacts the 5S rRNA and the P site tRNA. Forms a bridge to the 30S subunit in the 70S ribosome.

In terms of biological role, this is one of the proteins that bind and probably mediate the attachment of the 5S RNA into the large ribosomal subunit, where it forms part of the central protuberance. In the 70S ribosome it contacts protein S13 of the 30S subunit (bridge B1b), connecting the 2 subunits; this bridge is implicated in subunit movement. Contacts the P site tRNA; the 5S rRNA and some of its associated proteins might help stabilize positioning of ribosome-bound tRNAs. In Thermus thermophilus (strain ATCC BAA-163 / DSM 7039 / HB27), this protein is Large ribosomal subunit protein uL5.